Here is a 394-residue protein sequence, read N- to C-terminus: Na(+)/H(+) antiporter NhaA 2 (394 aa).

Transmembrane regions (helical) follow at residues 13-33 (FGGV…NGFL), 58-78 (LILW…GLEL), 93-113 (IALP…IFWA), 124-144 (GWAI…MLLG), 153-173 (IFLL…IAIF), 176-196 (TKLS…LWVL), 208-228 (ILVT…ATIA), 260-280 (YFIL…GVQI), 291-311 (IFFG…YIFI), 327-347 (FYGV…VNSL), and 361-381 (LGIL…LLVF).

This sequence belongs to the NhaA Na(+)/H(+) (TC 2.A.33) antiporter family.

It is found in the cell inner membrane. It catalyses the reaction Na(+)(in) + 2 H(+)(out) = Na(+)(out) + 2 H(+)(in). In terms of biological role, na(+)/H(+) antiporter that extrudes sodium in exchange for external protons. This is Na(+)/H(+) antiporter NhaA 2 from Campylobacter fetus subsp. fetus (strain 82-40).